Here is a 314-residue protein sequence, read N- to C-terminus: Ribosomal protein L11 methyltransferase (314 aa).

4 residues coordinate S-adenosyl-L-methionine: Thr163, Gly184, Asp206, and Asn248.

The protein belongs to the methyltransferase superfamily. PrmA family.

Its subcellular location is the cytoplasm. The catalysed reaction is L-lysyl-[protein] + 3 S-adenosyl-L-methionine = N(6),N(6),N(6)-trimethyl-L-lysyl-[protein] + 3 S-adenosyl-L-homocysteine + 3 H(+). Functionally, methylates ribosomal protein L11. The protein is Ribosomal protein L11 methyltransferase of Lactobacillus delbrueckii subsp. bulgaricus (strain ATCC BAA-365 / Lb-18).